Here is a 287-residue protein sequence, read N- to C-terminus: 4-hydroxybenzoate octaprenyltransferase (287 aa).

Transmembrane regions (helical) follow at residues 41–61 (WPLL…GCAM), 89–109 (WEAV…ILPL), 133–153 (FFAI…PMAF), 158–178 (DTVP…SVAY), 202–224 (FGRF…YVWI), and 266–286 (HNNW…LLAG).

This sequence belongs to the UbiA prenyltransferase family. Mg(2+) serves as cofactor.

It localises to the cell inner membrane. The enzyme catalyses all-trans-octaprenyl diphosphate + 4-hydroxybenzoate = 4-hydroxy-3-(all-trans-octaprenyl)benzoate + diphosphate. Its pathway is cofactor biosynthesis; ubiquinone biosynthesis. In terms of biological role, catalyzes the prenylation of para-hydroxybenzoate (PHB) with an all-trans polyprenyl group. Mediates the second step in the final reaction sequence of ubiquinone-8 (UQ-8) biosynthesis, which is the condensation of the polyisoprenoid side chain with PHB, generating the first membrane-bound Q intermediate 3-octaprenyl-4-hydroxybenzoate. The chain is 4-hydroxybenzoate octaprenyltransferase from Burkholderia cenocepacia (strain HI2424).